Consider the following 292-residue polypeptide: 4-hydroxy-tetrahydrodipicolinate synthase (292 aa).

T45 serves as a coordination point for pyruvate. Catalysis depends on Y133, which acts as the Proton donor/acceptor. Residue K161 is the Schiff-base intermediate with substrate of the active site. Residue I203 coordinates pyruvate.

This sequence belongs to the DapA family. As to quaternary structure, homodimer.

It localises to the cytoplasm. It catalyses the reaction L-aspartate 4-semialdehyde + pyruvate = (2S,4S)-4-hydroxy-2,3,4,5-tetrahydrodipicolinate + H2O + H(+). It participates in amino-acid biosynthesis; L-lysine biosynthesis via DAP pathway; (S)-tetrahydrodipicolinate from L-aspartate: step 3/4. Catalyzes the condensation of (S)-aspartate-beta-semialdehyde [(S)-ASA] and pyruvate to 4-hydroxy-tetrahydrodipicolinate (HTPA). In Pseudomonas savastanoi pv. phaseolicola (strain 1448A / Race 6) (Pseudomonas syringae pv. phaseolicola (strain 1448A / Race 6)), this protein is 4-hydroxy-tetrahydrodipicolinate synthase.